The sequence spans 295 residues: 4-hydroxy-tetrahydrodipicolinate synthase (295 aa).

Thr48 provides a ligand contact to pyruvate. Tyr136 serves as the catalytic Proton donor/acceptor. Residue Lys164 is the Schiff-base intermediate with substrate of the active site. Ile206 lines the pyruvate pocket.

It belongs to the DapA family. In terms of assembly, homotetramer; dimer of dimers.

The protein resides in the cytoplasm. The catalysed reaction is L-aspartate 4-semialdehyde + pyruvate = (2S,4S)-4-hydroxy-2,3,4,5-tetrahydrodipicolinate + H2O + H(+). It functions in the pathway amino-acid biosynthesis; L-lysine biosynthesis via DAP pathway; (S)-tetrahydrodipicolinate from L-aspartate: step 3/4. Functionally, catalyzes the condensation of (S)-aspartate-beta-semialdehyde [(S)-ASA] and pyruvate to 4-hydroxy-tetrahydrodipicolinate (HTPA). This Actinobacillus pleuropneumoniae serotype 5b (strain L20) protein is 4-hydroxy-tetrahydrodipicolinate synthase.